The chain runs to 568 residues: Periplasmic trehalase (568 aa).

An N-terminal signal peptide occupies residues 1–39; sequence MPHVVARSGDVMSSAAPPSCTSLLGLSLSMFVAPCTLTA. Substrate is bound by residues Arg169, 176–177, Asn213, 222–224, 294–296, and Gly327; these read WD, RSQ, and RPE. Active-site proton donor/acceptor residues include Asp329 and Glu511. Substrate is bound at residue Glu526.

It belongs to the glycosyl hydrolase 37 family.

Its subcellular location is the periplasm. It catalyses the reaction alpha,alpha-trehalose + H2O = alpha-D-glucose + beta-D-glucose. In terms of biological role, provides the cells with the ability to utilize trehalose at high osmolarity by splitting it into glucose molecules that can subsequently be taken up by the phosphotransferase-mediated uptake system. The protein is Periplasmic trehalase of Xanthomonas oryzae pv. oryzae (strain MAFF 311018).